The sequence spans 438 residues: EF-hand calcium-binding domain-containing protein 3 (438 aa).

EF-hand domains are found at residues 47-82 and 83-118; these read SQMR…LGMN and LTKH…KNRF. 5 residues coordinate Ca(2+): aspartate 96, aspartate 98, aspartate 100, lysine 102, and aspartate 107. Tyrosine 279 is modified (phosphotyrosine). Residues 413–438 form a disordered region; the sequence is SSSDISECDTDTGRKRKRKGFKGFRQ. Over residues 426-438 the composition is skewed to basic residues; it reads RKRKRKGFKGFRQ.

In Bos taurus (Bovine), this protein is EF-hand calcium-binding domain-containing protein 3 (EFCAB3).